The sequence spans 389 residues: Phospho-N-acetylmuramoyl-pentapeptide-transferase (389 aa).

The next 10 membrane-spanning stretches (helical) occupy residues 25-45 (RAVMATITALLIGLVCGPAVI), 73-93 (TMGGVLILLGIAVATLLWADL), 97-117 (FIWIVMLVTFGFGVIGWVDDY), 135-155 (FWQSVIGLFAAVYLAFSVSEA), 190-210 (ISYPLGVWGFIVLTYLVIVGA), 222-242 (GLVIMPVVLVGASLGVFAYVM), 259-279 (AGELLIFCSAMGGAGLAFLWF), 287-307 (FMGDVGALALGGALGTVAVIV), 311-331 (IVLFIMGGIFVAETLSVMLQV), and 366-386 (QVVVRFWIITLMLCLFGLSTL).

It belongs to the glycosyltransferase 4 family. MraY subfamily. It depends on Mg(2+) as a cofactor.

It is found in the cell inner membrane. It carries out the reaction UDP-N-acetyl-alpha-D-muramoyl-L-alanyl-gamma-D-glutamyl-meso-2,6-diaminopimeloyl-D-alanyl-D-alanine + di-trans,octa-cis-undecaprenyl phosphate = di-trans,octa-cis-undecaprenyl diphospho-N-acetyl-alpha-D-muramoyl-L-alanyl-D-glutamyl-meso-2,6-diaminopimeloyl-D-alanyl-D-alanine + UMP. The protein operates within cell wall biogenesis; peptidoglycan biosynthesis. Functionally, catalyzes the initial step of the lipid cycle reactions in the biosynthesis of the cell wall peptidoglycan: transfers peptidoglycan precursor phospho-MurNAc-pentapeptide from UDP-MurNAc-pentapeptide onto the lipid carrier undecaprenyl phosphate, yielding undecaprenyl-pyrophosphoryl-MurNAc-pentapeptide, known as lipid I. This is Phospho-N-acetylmuramoyl-pentapeptide-transferase from Paraburkholderia phytofirmans (strain DSM 17436 / LMG 22146 / PsJN) (Burkholderia phytofirmans).